We begin with the raw amino-acid sequence, 198 residues long: MYVRIVQDLIRELGKLPGIGPKSAQRITFFILQNPSFDIDRLSETLQSVRKQVQFCKVCGNFSEEDECVICSDPRRDRGVICVVEEPKDVVAIEKTREFSGLYHVLGGAISPIDGVGPDDLNIRQLLQRLADGTITEVVLATDPNMEGEATASYIARVISAMRIRVSKLASGLPVGSDLEYADEITLGRALEGRQYIN.

Residues 56-71 (CKVCGNFSEEDECVIC) form a C4-type zinc finger. Positions 79 to 174 (GVICVVEEPK…RVSKLASGLP (96 aa)) constitute a Toprim domain.

The protein belongs to the RecR family.

Its function is as follows. May play a role in DNA repair. It seems to be involved in an RecBC-independent recombinational process of DNA repair. It may act with RecF and RecO. This chain is Recombination protein RecR, found in Tropheryma whipplei (strain Twist) (Whipple's bacillus).